A 185-amino-acid chain; its full sequence is Ribosome-recycling factor (185 aa).

The segment covering 131–155 (DRKNANDKIKKSEKDKEITADESKS) has biased composition (basic and acidic residues). The interval 131–156 (DRKNANDKIKKSEKDKEITADESKSA) is disordered.

This sequence belongs to the RRF family.

The protein localises to the cytoplasm. Responsible for the release of ribosomes from messenger RNA at the termination of protein biosynthesis. May increase the efficiency of translation by recycling ribosomes from one round of translation to another. The protein is Ribosome-recycling factor of Sulfurimonas denitrificans (strain ATCC 33889 / DSM 1251) (Thiomicrospira denitrificans (strain ATCC 33889 / DSM 1251)).